The primary structure comprises 126 residues: 13 kDa ribonucleoprotein-associated protein (126 aa).

Belongs to the eukaryotic ribosomal protein eL8 family. As to quaternary structure, component of the U3 snoRNP particle. Binds to the C'/D and B/C motifs in U3 snoRNA. Component of the 25S U4/U6.U5 tri-snRNP particle, a subcomplex of the spliceosome. Binds to the 5' stem-loop of U4 snRNA.

Its subcellular location is the nucleus. It localises to the nucleolus. Functionally, common component of the spliceosome and rRNA processing machinery. In association with the spliceosomal U4/U6.U5 tri-snRNP particle, required for splicing of pre-mRNA. In association with box C/D snoRNPs, required for processing of pre-ribosomal RNA (rRNA) and site-specific 2'-O-methylation of substrate RNAs. Essential for the accumulation and stability of U4 snRNA, U6 snRNA, and box C/D snoRNAs. The protein is 13 kDa ribonucleoprotein-associated protein (SNU13) of Yarrowia lipolytica (strain CLIB 122 / E 150) (Yeast).